Consider the following 299-residue polypeptide: Probable lipid kinase YegS-like (299 aa).

In terms of domain architecture, DAGKc spans 2-133 (ATFPASLLIL…IDIAQVNDKT (132 aa)). ATP is bound by residues Thr40, 66–72 (GDGTINE), and Thr95. Mg(2+) contacts are provided by Leu215, Asp218, and Leu220. The active-site Proton acceptor is Glu271.

It belongs to the diacylglycerol/lipid kinase family. YegS lipid kinase subfamily. Mg(2+) serves as cofactor. The cofactor is Ca(2+).

The protein resides in the cytoplasm. Its function is as follows. Probably phosphorylates lipids; the in vivo substrate is unknown. The polypeptide is Probable lipid kinase YegS-like (Citrobacter koseri (strain ATCC BAA-895 / CDC 4225-83 / SGSC4696)).